Consider the following 217-residue polypeptide: Cobalt-precorrin-8 methylmutase (217 aa).

The substrate site is built by S12 and R35. The active-site Proton donor/acceptor is H38.

This sequence belongs to the CobH/CbiC family. In terms of assembly, homodimer.

The catalysed reaction is Co-precorrin-8X = cob(II)yrinate. The protein operates within cofactor biosynthesis; adenosylcobalamin biosynthesis; cob(II)yrinate a,c-diamide from sirohydrochlorin (anaerobic route): step 9/10. Functionally, catalyzes the conversion of cobalt-precorrin-8 to cobyrinate. This is Cobalt-precorrin-8 methylmutase (cbiC) from Synechocystis sp. (strain ATCC 27184 / PCC 6803 / Kazusa).